We begin with the raw amino-acid sequence, 264 residues long: Tritrans,polycis-undecaprenyl-diphosphate synthase (geranylgeranyl-diphosphate specific) (264 aa).

Residue Asp-43 is part of the active site. Residue Asp-43 participates in Mg(2+) binding. Substrate is bound by residues 44–47 (GNRR), Trp-48, His-60, and 88–90 (STE). The active-site Proton acceptor is the Asn-91. Substrate contacts are provided by residues Phe-92, Arg-94, Arg-213, and 219 to 221 (RIS). Residue Glu-232 participates in Mg(2+) binding.

It belongs to the UPP synthase family. In terms of assembly, homodimer. Requires Mg(2+) as cofactor.

The enzyme catalyses geranylgeranyl diphosphate + 7 isopentenyl diphosphate = tri-trans,hepta-cis-undecaprenyl diphosphate + 7 diphosphate. Its function is as follows. Catalyzes the sequential condensation of isopentenyl diphosphate (IPP) with geranylgeranyl diphosphate (GGPP) to yield (2Z,6Z,10Z,14Z,18Z,22Z,26Z,30E,34E,38E)-undecaprenyl diphosphate (tritrans,heptacis-UPP). It is probably the precursor of glycosyl carrier lipids. This is Tritrans,polycis-undecaprenyl-diphosphate synthase (geranylgeranyl-diphosphate specific) from Thermococcus kodakarensis (strain ATCC BAA-918 / JCM 12380 / KOD1) (Pyrococcus kodakaraensis (strain KOD1)).